Reading from the N-terminus, the 310-residue chain is Nitric oxide synthase-interacting protein homolog (310 aa).

Residues 115–124 show a composition bias toward polar residues; the sequence is FSAIESTPSR. Residues 115–141 are disordered; the sequence is FSAIESTPSRTGAVATPRPEVGSLKRQ.

Belongs to the NOSIP family.

It localises to the cytoplasm. The protein resides in the nucleus. Negatively regulates nitric oxide production by inducing nitric oxide synthase translocation to actin cytoskeleton and inhibiting its enzymatic activity. The protein is Nitric oxide synthase-interacting protein homolog of Caenorhabditis elegans.